A 286-amino-acid chain; its full sequence is Pantothenate synthetase (286 aa).

ATP is bound at residue Met30–His37. The Proton donor role is filled by His37. Gln61 lines the (R)-pantoate pocket. Position 61 (Gln61) interacts with beta-alanine. Gly147–Asp150 lines the ATP pocket. Residue Gln153 participates in (R)-pantoate binding. ATP is bound by residues Val176 and Lys184 to Arg187.

The protein belongs to the pantothenate synthetase family. In terms of assembly, homodimer.

The protein localises to the cytoplasm. It catalyses the reaction (R)-pantoate + beta-alanine + ATP = (R)-pantothenate + AMP + diphosphate + H(+). It functions in the pathway cofactor biosynthesis; (R)-pantothenate biosynthesis; (R)-pantothenate from (R)-pantoate and beta-alanine: step 1/1. In terms of biological role, catalyzes the condensation of pantoate with beta-alanine in an ATP-dependent reaction via a pantoyl-adenylate intermediate. The chain is Pantothenate synthetase from Bacillus velezensis (strain DSM 23117 / BGSC 10A6 / LMG 26770 / FZB42) (Bacillus amyloliquefaciens subsp. plantarum).